Consider the following 247-residue polypeptide: MRMKCTISYDGHLFYGYQVQPGQRTIQDELEKALQTLHKAKERIPVVSSGRTDSGVHAVGQTIHFDSPLSIPEAKWPYALNALLPDDISVRKAEAVNDQFHARFSAKRKEYRYMIYRGRHPDVFKRYYAYHVPYDLDMEKVKEASRYLVGTHDFTSFCATKTEVKDKVRTVHELEWSDTGDGLQMRIVGSGFLYNMVRIIAGTLLDVGTGKFSPGDIEKMILAKNRDAAGRTAPAHGLYLWRVIYDN.

Asp53 (nucleophile) is an active-site residue. A substrate-binding site is contributed by Tyr111.

The protein belongs to the tRNA pseudouridine synthase TruA family. Homodimer.

It carries out the reaction uridine(38/39/40) in tRNA = pseudouridine(38/39/40) in tRNA. Functionally, formation of pseudouridine at positions 38, 39 and 40 in the anticodon stem and loop of transfer RNAs. This Bacillus licheniformis (strain ATCC 14580 / DSM 13 / JCM 2505 / CCUG 7422 / NBRC 12200 / NCIMB 9375 / NCTC 10341 / NRRL NRS-1264 / Gibson 46) protein is tRNA pseudouridine synthase A.